The primary structure comprises 311 residues: tRNA (guanine-N(7)-)-methyltransferase (311 aa).

3 residues coordinate S-adenosyl-L-methionine: glutamate 28, glutamate 53, and aspartate 103. Residue aspartate 103 is part of the active site. 2 residues coordinate substrate: lysine 107 and aspartate 139.

This sequence belongs to the class I-like SAM-binding methyltransferase superfamily. TrmB family.

The enzyme catalyses guanosine(46) in tRNA + S-adenosyl-L-methionine = N(7)-methylguanosine(46) in tRNA + S-adenosyl-L-homocysteine. It functions in the pathway tRNA modification; N(7)-methylguanine-tRNA biosynthesis. Functionally, catalyzes the formation of N(7)-methylguanine at position 46 (m7G46) in tRNA. The protein is tRNA (guanine-N(7)-)-methyltransferase of Thermus thermophilus (strain ATCC BAA-163 / DSM 7039 / HB27).